We begin with the raw amino-acid sequence, 358 residues long: Phenylalanine--tRNA ligase alpha subunit (358 aa).

Position 258 (glutamate 258) interacts with Mg(2+).

The protein belongs to the class-II aminoacyl-tRNA synthetase family. Phe-tRNA synthetase alpha subunit type 1 subfamily. In terms of assembly, tetramer of two alpha and two beta subunits. Mg(2+) is required as a cofactor.

The protein resides in the cytoplasm. The enzyme catalyses tRNA(Phe) + L-phenylalanine + ATP = L-phenylalanyl-tRNA(Phe) + AMP + diphosphate + H(+). The sequence is that of Phenylalanine--tRNA ligase alpha subunit from Rhodospirillum centenum (strain ATCC 51521 / SW).